Here is a 624-residue protein sequence, read N- to C-terminus: Carbon monoxide dehydrogenase (624 aa).

[4Fe-4S] cluster is bound by residues C37, C46, C49, C54, and C65. [Ni-4Fe-5S] cluster-binding residues include H256, C292, C336, C444, C475, and C516.

This sequence belongs to the Ni-containing carbon monoxide dehydrogenase family. Homodimer. [4Fe-4S] cluster serves as cofactor. It depends on [Ni-4Fe-5S] cluster as a cofactor.

It catalyses the reaction CO + 2 oxidized [2Fe-2S]-[ferredoxin] + H2O = 2 reduced [2Fe-2S]-[ferredoxin] + CO2 + 2 H(+). Functionally, CODH oxidizes carbon monoxide coupled, via CooF, to the reduction of a hydrogen cation by a hydrogenase (possibly CooH). The polypeptide is Carbon monoxide dehydrogenase (cooS) (Methanocaldococcus jannaschii (strain ATCC 43067 / DSM 2661 / JAL-1 / JCM 10045 / NBRC 100440) (Methanococcus jannaschii)).